The sequence spans 676 residues: Methionine--tRNA ligase (676 aa).

The 'HIGH' region motif lies at 15-25 (PYANGPIHLGH). Positions 146, 149, 159, and 162 each coordinate Zn(2+). The 'KMSKS' region signature appears at 332–336 (KMSKS). Residue K335 participates in ATP binding. The tRNA-binding domain occupies 575–676 (DFAKIDLRIA…EGAQPGMRVK (102 aa)).

The protein belongs to the class-I aminoacyl-tRNA synthetase family. MetG type 1 subfamily. As to quaternary structure, homodimer. The cofactor is Zn(2+).

It localises to the cytoplasm. It carries out the reaction tRNA(Met) + L-methionine + ATP = L-methionyl-tRNA(Met) + AMP + diphosphate. Functionally, is required not only for elongation of protein synthesis but also for the initiation of all mRNA translation through initiator tRNA(fMet) aminoacylation. This is Methionine--tRNA ligase from Shewanella sp. (strain MR-4).